The chain runs to 476 residues: Cysteine--tRNA ligase (476 aa).

Cys29 lines the Zn(2+) pocket. The 'HIGH' region motif lies at 31–41 (PTVYDYPHLGH). Residues Cys209, His234, and Glu238 each coordinate Zn(2+). The short motif at 266–270 (KMSKS) is the 'KMSKS' region element. Residue Lys269 coordinates ATP.

Belongs to the class-I aminoacyl-tRNA synthetase family. Zn(2+) serves as cofactor.

The protein localises to the cytoplasm. The enzyme catalyses tRNA(Cys) + L-cysteine + ATP = L-cysteinyl-tRNA(Cys) + AMP + diphosphate. The chain is Cysteine--tRNA ligase (cysS) from Pyrococcus horikoshii (strain ATCC 700860 / DSM 12428 / JCM 9974 / NBRC 100139 / OT-3).